Consider the following 475-residue polypeptide: MNTALAQQIANEGGVEAWMIAQQHKSLLRFLTCGSVDDGKSTLIGRLLHDTRQIYEDQLSSLHNDSKRHGTQGEKLDLALLVDGLQAEREQGITIDVAYRYFSTEKRKFIIADTPGHEQYTRNMATGASTCELAILLIDARKGVLDQTRRHSFISTLLGIKHLVVAINKMDLVGYSEETFTRIREDYLTFAGQLPGNLDIRFVPLSALEGDNVASQSESMPWYSGPTLLEVLETVEIQRVVDAQPMRFPVQYVNRPNLDFRGYAGTLASGRVEVGQRVKVLPSGVESNVARIVTFDGDREEAFAGEAITLVLTDEIDISRGDLLLAADEALPAVQSASVDVVWMAEQPLSAGQSYDIKIAGKKTRARVDGIRYQVDINNLTQREVENLPLNGIGLVDLTFDEPLVLDRYQQNPVTGGLIFIDRLSNVTVGAGMVHEPVSQATAAPSEFSAFELELNALVRRHFPHWGARDLLGDK.

The tr-type G domain occupies 25-239 (KSLLRFLTCG…EVLETVEIQR (215 aa)). The G1 stretch occupies residues 34-41 (GSVDDGKS). Residue 34-41 (GSVDDGKS) coordinates GTP. The tract at residues 92-96 (GITID) is G2. A G3 region spans residues 113–116 (DTPG). GTP contacts are provided by residues 113–117 (DTPGH) and 168–171 (NKMD). A G4 region spans residues 168 to 171 (NKMD). Positions 206–208 (SAL) are G5.

It belongs to the TRAFAC class translation factor GTPase superfamily. Classic translation factor GTPase family. CysN/NodQ subfamily. In terms of assembly, heterodimer composed of CysD, the smaller subunit, and CysN.

The enzyme catalyses sulfate + ATP + H(+) = adenosine 5'-phosphosulfate + diphosphate. It functions in the pathway sulfur metabolism; hydrogen sulfide biosynthesis; sulfite from sulfate: step 1/3. Functionally, with CysD forms the ATP sulfurylase (ATPS) that catalyzes the adenylation of sulfate producing adenosine 5'-phosphosulfate (APS) and diphosphate, the first enzymatic step in sulfur assimilation pathway. APS synthesis involves the formation of a high-energy phosphoric-sulfuric acid anhydride bond driven by GTP hydrolysis by CysN coupled to ATP hydrolysis by CysD. The protein is Sulfate adenylyltransferase subunit 1 of Escherichia coli O17:K52:H18 (strain UMN026 / ExPEC).